A 782-amino-acid chain; its full sequence is Endonuclease MutS2 (782 aa).

Position 336 to 343 (G336 to T343) interacts with ATP. Residues L707–K782 enclose the Smr domain.

It belongs to the DNA mismatch repair MutS family. MutS2 subfamily. In terms of assembly, homodimer. Binds to stalled ribosomes, contacting rRNA.

In terms of biological role, endonuclease that is involved in the suppression of homologous recombination and thus may have a key role in the control of bacterial genetic diversity. Its function is as follows. Acts as a ribosome collision sensor, splitting the ribosome into its 2 subunits. Detects stalled/collided 70S ribosomes which it binds and splits by an ATP-hydrolysis driven conformational change. Acts upstream of the ribosome quality control system (RQC), a ribosome-associated complex that mediates the extraction of incompletely synthesized nascent chains from stalled ribosomes and their subsequent degradation. Probably generates substrates for RQC. This chain is Endonuclease MutS2, found in Staphylococcus epidermidis (strain ATCC 35984 / DSM 28319 / BCRC 17069 / CCUG 31568 / BM 3577 / RP62A).